We begin with the raw amino-acid sequence, 960 residues long: Angiomotin-like protein 1 (960 aa).

Residues 196–248 (SQFFRGQQPPPPPPQQQPGAVGHSYYMAGGASQKARTEGRPTVSRANSGQAHK) are disordered. Serine 243, serine 271, and serine 297 each carry phosphoserine. Residues 261 to 281 (RSLSERIMQLSLERNGAKQHL) are a coiled coil. Disordered regions lie at residues 277–317 (AKQH…EYPF), 381–407 (LPFP…LHSV), and 413–432 (PPMA…SQQL). The segment covering 388–401 (QQHSPVSSQNSSVS) has biased composition (low complexity). 2 coiled-coil regions span residues 440–641 (VERA…WLER) and 667–697 (ALME…VEES). A Phosphoserine modification is found at serine 722. The stretch at 731–761 (SLEAHIWQEEEEVVQATRRCQDMEYTIKNLH) forms a coiled coil. The disordered stretch occupies residues 775-826 (QQRSRKDAGKTDSSSLRPARSVPSIAAATGTHSRQTSLTSSQLAEERKEEKT). Residues serine 795, serine 807, and serine 830 each carry the phosphoserine modification. The segment covering 804–817 (GTHSRQTSLTSSQL) has biased composition (polar residues). Positions 842–952 (NDHASTPLLP…NLLHKPEFPD (111 aa)) are disordered. Low complexity predominate over residues 845–870 (ASTPLLPTPSAATLSPPTPGTSASSA). Over residues 898–911 (PTRSRLSGTPSNSP) the composition is skewed to polar residues. The residue at position 904 (serine 904) is a Phosphoserine. Threonine 906 carries the post-translational modification Phosphothreonine. Serine 910 carries the post-translational modification Phosphoserine. The PDZ-binding motif lies at 957–960 (EVLI).

This sequence belongs to the angiomotin family. Polyubiquitinated by NEDD4, leading to proteasomal degradation.

It localises to the cell junction. The protein localises to the tight junction. Its function is as follows. Inhibits the Wnt/beta-catenin signaling pathway, probably by recruiting CTNNB1 to recycling endosomes and hence preventing its translocation to the nucleus. The sequence is that of Angiomotin-like protein 1 (AMOTL1) from Bos taurus (Bovine).